We begin with the raw amino-acid sequence, 208 residues long: Large ribosomal subunit protein bL9 (208 aa).

The interval 161 to 208 is disordered; that stretch reads KKRKIEKEVEEGSGTSVDESLKLDSVSDSIDTSGVNSSDKEEENNIIE. Polar residues predominate over residues 186 to 197; that stretch reads VSDSIDTSGVNS.

This sequence belongs to the bacterial ribosomal protein bL9 family.

Its function is as follows. Binds to the 23S rRNA. This Ehrlichia canis (strain Jake) protein is Large ribosomal subunit protein bL9.